We begin with the raw amino-acid sequence, 92 residues long: MDISTDNPDHGFQFPGTFELSAMGTAERGLETELPRLLAATGVELLQESVSWKHSSSGKYVSVKIGFRAQSREQFEAAHQALRDHPEVKWTL.

The protein belongs to the UPF0250 family.

This Xanthomonas axonopodis pv. citri (strain 306) protein is UPF0250 protein XAC0666.